We begin with the raw amino-acid sequence, 200 residues long: UPF0301 protein BOV_0485 (200 aa).

Belongs to the UPF0301 (AlgH) family.

The polypeptide is UPF0301 protein BOV_0485 (Brucella ovis (strain ATCC 25840 / 63/290 / NCTC 10512)).